The following is a 497-amino-acid chain: tRNA-2-methylthio-N(6)-dimethylallyladenosine synthase (497 aa).

A disordered region spans residues 1 to 48; that stretch reads MTGTSNIPTHGKEHKDAPALLPLPAPNTHHTHAAHPGDPSHDRHPSRG. Residues 18 to 28 show a composition bias toward low complexity; the sequence is PALLPLPAPNT. One can recognise an MTTase N-terminal domain in the interval 48–165; sequence GKLFIKTHGC…LPDMIRARRE (118 aa). The [4Fe-4S] cluster site is built by Cys57, Cys94, Cys128, Cys202, Cys206, and Cys209. The region spanning 188–430 is the Radical SAM core domain; it reads RAEGPSAFVS…QKHINAYAAD (243 aa). Residues 433–496 enclose the TRAM domain; it reads KRMIGTVQTV…TNSLRGRVHT (64 aa).

Belongs to the methylthiotransferase family. MiaB subfamily. As to quaternary structure, monomer. Requires [4Fe-4S] cluster as cofactor.

Its subcellular location is the cytoplasm. The catalysed reaction is N(6)-dimethylallyladenosine(37) in tRNA + (sulfur carrier)-SH + AH2 + 2 S-adenosyl-L-methionine = 2-methylsulfanyl-N(6)-dimethylallyladenosine(37) in tRNA + (sulfur carrier)-H + 5'-deoxyadenosine + L-methionine + A + S-adenosyl-L-homocysteine + 2 H(+). In terms of biological role, catalyzes the methylthiolation of N6-(dimethylallyl)adenosine (i(6)A), leading to the formation of 2-methylthio-N6-(dimethylallyl)adenosine (ms(2)i(6)A) at position 37 in tRNAs that read codons beginning with uridine. This chain is tRNA-2-methylthio-N(6)-dimethylallyladenosine synthase, found in Xylella fastidiosa (strain M23).